A 320-amino-acid polypeptide reads, in one-letter code: Probable cell division protein WhiA (320 aa).

Residues T276 to A310 constitute a DNA-binding region (H-T-H motif).

Belongs to the WhiA family.

Involved in cell division and chromosome segregation. This chain is Probable cell division protein WhiA, found in Geobacillus sp. (strain WCH70).